The primary structure comprises 507 residues: Blue light receptor lreB (507 aa).

In terms of domain architecture, PAS spans 170-234 (RVLNEMKDML…EEMNECITTT (65 aa)). The segment at 463-488 (CTDCGTSDSPEWRKGPEGPKTLCNAC) adopts a GATA-type zinc-finger fold.

Its function is as follows. Probable transcription factor involved in light regulation. Plays crucial roles in fungal growth and asexual development. Involved in conidiophore formation, sclerotium production, and conidial stress tolerance. Positively regulates the fungal pathogenicity towards maize and aflatoxin B1 production. The chain is Blue light receptor lreB from Aspergillus flavus.